Consider the following 309-residue polypeptide: Thiamine-monophosphate kinase (309 aa).

The Mg(2+) site is built by Asp41 and Asp55. His62 contacts substrate. The Mg(2+) site is built by Asp83, Asp128, and Asp215. Residue 127–128 coordinates ATP; the sequence is GD. Ser217 is a binding site for ATP. Asp218 is a Mg(2+) binding site. Residue Glu268 coordinates substrate.

It belongs to the thiamine-monophosphate kinase family.

It catalyses the reaction thiamine phosphate + ATP = thiamine diphosphate + ADP. The protein operates within cofactor biosynthesis; thiamine diphosphate biosynthesis; thiamine diphosphate from thiamine phosphate: step 1/1. Catalyzes the ATP-dependent phosphorylation of thiamine-monophosphate (TMP) to form thiamine-pyrophosphate (TPP), the active form of vitamin B1. The chain is Thiamine-monophosphate kinase from Methanopyrus kandleri (strain AV19 / DSM 6324 / JCM 9639 / NBRC 100938).